A 222-amino-acid polypeptide reads, in one-letter code: Thiamine-phosphate synthase (222 aa).

4-amino-2-methyl-5-(diphosphooxymethyl)pyrimidine is bound by residues 40-44 (QLRDK) and asparagine 81. The Mg(2+) site is built by aspartate 82 and aspartate 101. Serine 120 lines the 4-amino-2-methyl-5-(diphosphooxymethyl)pyrimidine pocket. 146–148 (TPT) contributes to the 2-[(2R,5Z)-2-carboxy-4-methylthiazol-5(2H)-ylidene]ethyl phosphate binding site. Lysine 149 is a 4-amino-2-methyl-5-(diphosphooxymethyl)pyrimidine binding site. Residue glycine 178 participates in 2-[(2R,5Z)-2-carboxy-4-methylthiazol-5(2H)-ylidene]ethyl phosphate binding.

The protein belongs to the thiamine-phosphate synthase family. The cofactor is Mg(2+).

The catalysed reaction is 2-[(2R,5Z)-2-carboxy-4-methylthiazol-5(2H)-ylidene]ethyl phosphate + 4-amino-2-methyl-5-(diphosphooxymethyl)pyrimidine + 2 H(+) = thiamine phosphate + CO2 + diphosphate. It carries out the reaction 2-(2-carboxy-4-methylthiazol-5-yl)ethyl phosphate + 4-amino-2-methyl-5-(diphosphooxymethyl)pyrimidine + 2 H(+) = thiamine phosphate + CO2 + diphosphate. The enzyme catalyses 4-methyl-5-(2-phosphooxyethyl)-thiazole + 4-amino-2-methyl-5-(diphosphooxymethyl)pyrimidine + H(+) = thiamine phosphate + diphosphate. The protein operates within cofactor biosynthesis; thiamine diphosphate biosynthesis; thiamine phosphate from 4-amino-2-methyl-5-diphosphomethylpyrimidine and 4-methyl-5-(2-phosphoethyl)-thiazole: step 1/1. Its function is as follows. Condenses 4-methyl-5-(beta-hydroxyethyl)thiazole monophosphate (THZ-P) and 2-methyl-4-amino-5-hydroxymethyl pyrimidine pyrophosphate (HMP-PP) to form thiamine monophosphate (TMP). The chain is Thiamine-phosphate synthase from Mycobacterium tuberculosis (strain ATCC 25177 / H37Ra).